The primary structure comprises 404 residues: Glycosylated lysosomal membrane protein B (404 aa).

An N-terminal signal peptide occupies residues 1–24 (MSCTRGWRLILLGLLCVGLLGTRG). Residues 25–364 (QDESRKVSVQ…YGDPPRDSFS (340 aa)) lie on the Lumenal side of the membrane. Asn-85, Asn-124, Asn-128, Asn-142, Asn-152, Asn-156, Asn-163, Asn-168, Asn-178, Asn-189, Asn-205, Asn-221, Asn-266, Asn-303, and Asn-330 each carry an N-linked (GlcNAc...) asparagine glycan. The helical transmembrane segment at 365–385 (ILVICIMAVALGTPLLLLIIG) threads the bilayer. Topologically, residues 386–404 (TVLVTAVRHKVYPNYQPIN) are cytoplasmic. A Lysosomal targeting motif motif is present at residues 400-404 (YQPIN).

This sequence belongs to the GLMP family. As to quaternary structure, interacts (via lumenal domain) with lysosomal protein MFSD1; the interaction starts while both proteins are still in the endoplasmic reticulum and is required for stabilization of MFSD1 in lysosomes but has no direct effect on its targeting to lysosomes or transporter activity.

It localises to the lysosome membrane. In terms of biological role, required to protect lysosomal transporter MFSD1 from lysosomal proteolysis and for MFSD1 lysosomal localization. This is Glycosylated lysosomal membrane protein B (glmp-b) from Xenopus laevis (African clawed frog).